The following is a 105-amino-acid chain: Nucleoid-associated protein ABO_1774 (105 aa).

The disordered stretch occupies residues 85–105 (QQQDSMQNMAGGFPFPPGFKP).

This sequence belongs to the YbaB/EbfC family. As to quaternary structure, homodimer.

The protein localises to the cytoplasm. The protein resides in the nucleoid. Functionally, binds to DNA and alters its conformation. May be involved in regulation of gene expression, nucleoid organization and DNA protection. The polypeptide is Nucleoid-associated protein ABO_1774 (Alcanivorax borkumensis (strain ATCC 700651 / DSM 11573 / NCIMB 13689 / SK2)).